The following is a 256-amino-acid chain: Protein RKD4 (256 aa).

Residues E130–E216 enclose the RWP-RK domain. A coiled-coil region spans residues R190 to E224.

It localises to the nucleus. Putative transcription factor. The protein is Protein RKD4 (RKD4) of Arabidopsis thaliana (Mouse-ear cress).